We begin with the raw amino-acid sequence, 248 residues long: Protein maestro (248 aa).

The interval 1–21 is disordered; sequence MDQRQRRILGQPLSIPTSQPK. Residues 128-163 form an HEAT repeat; the sequence is SFFIDITLQTRTLLDDENDSLRYSAFVLFGQLAAFA.

As to expression, ubiquitous.

The protein localises to the nucleus. The protein resides in the nucleolus. This chain is Protein maestro (MRO), found in Homo sapiens (Human).